The chain runs to 20 residues: Chemoheterotroph-specific protein (20 aa).

The protein is Chemoheterotroph-specific protein of Thiomonas delicata (Thiomonas cuprina).